A 266-amino-acid polypeptide reads, in one-letter code: Probable dihydroorotate dehydrogenase B (NAD(+)), electron transfer subunit (266 aa).

The FAD-binding FR-type domain occupies 5-99; that stretch reads NVPEVLEIKR…RGPYGRGFEL (95 aa). Residues C217, C222, C225, and C235 each coordinate [2Fe-2S] cluster.

It belongs to the PyrK family. In terms of assembly, heterotetramer of 2 PyrK and 2 PyrD type B subunits. [2Fe-2S] cluster is required as a cofactor. FAD serves as cofactor.

It participates in pyrimidine metabolism; UMP biosynthesis via de novo pathway; orotate from (S)-dihydroorotate (NAD(+) route): step 1/1. Its function is as follows. Responsible for channeling the electrons from the oxidation of dihydroorotate from the FMN redox center in the PyrD type B subunit to the ultimate electron acceptor NAD(+). The sequence is that of Probable dihydroorotate dehydrogenase B (NAD(+)), electron transfer subunit from Methanothermobacter thermautotrophicus (strain ATCC 29096 / DSM 1053 / JCM 10044 / NBRC 100330 / Delta H) (Methanobacterium thermoautotrophicum).